We begin with the raw amino-acid sequence, 221 residues long: Histidine biosynthesis bifunctional protein HisIE (221 aa).

Positions 1–121 (MNITKIDWQK…KKQQFANWAW (121 aa)) are phosphoribosyl-AMP cyclohydrolase. The tract at residues 122–221 (FIKLEQHLKE…IGLHPEGGNK (100 aa)) is phosphoribosyl-ATP pyrophosphohydrolase.

This sequence in the N-terminal section; belongs to the PRA-CH family. In the C-terminal section; belongs to the PRA-PH family.

It localises to the cytoplasm. It carries out the reaction 1-(5-phospho-beta-D-ribosyl)-ATP + H2O = 1-(5-phospho-beta-D-ribosyl)-5'-AMP + diphosphate + H(+). The enzyme catalyses 1-(5-phospho-beta-D-ribosyl)-5'-AMP + H2O = 1-(5-phospho-beta-D-ribosyl)-5-[(5-phospho-beta-D-ribosylamino)methylideneamino]imidazole-4-carboxamide. It functions in the pathway amino-acid biosynthesis; L-histidine biosynthesis; L-histidine from 5-phospho-alpha-D-ribose 1-diphosphate: step 2/9. Its pathway is amino-acid biosynthesis; L-histidine biosynthesis; L-histidine from 5-phospho-alpha-D-ribose 1-diphosphate: step 3/9. The chain is Histidine biosynthesis bifunctional protein HisIE (hisI) from Haemophilus influenzae (strain ATCC 51907 / DSM 11121 / KW20 / Rd).